A 244-amino-acid polypeptide reads, in one-letter code: Salivary gland SP38-40.A protein (244 aa).

The signal sequence occupies residues 1-21; sequence MRIKFLVVLAVICLFAHYASA. 3 disordered regions span residues 23–91, 137–169, and 206–244; these read GMGG…EKKQ, PPPG…LRKE, and VQGK…DAKK. 2 stretches are compositionally biased toward basic and acidic residues: residues 26 to 86 and 157 to 169; these read GDKK…EVKK and PPKE…LRKE. 2 tandem repeats follow at residues 29-34 and 35-40. Residues 29–47 are 3 X 6 AA approximate tandem repeats of K-P-K-D-A-P; that stretch reads KPKDAPKPKDAPKPKEVKP. The 1-3; approximate repeat unit spans residues 41-47; the sequence is KPKEVKP. 2 repeat units span residues 156–159 and 161–164. The segment at 156 to 168 is 3 X 4 AA approximate tandem repeats of K-P-P-K; it reads KPPKEKPPKKLRK. One copy of the 2-3; approximate repeat lies at 165 to 168; the sequence is KLRK. Over residues 209–224 the composition is skewed to basic residues; it reads KQKKGAKKAKGGKKAA. 3 consecutive repeat copies span residues 225-228, 229-232, and 233-236. The tract at residues 225 to 240 is 4 X 4 AA approximate tandem repeats of P-K-[PQ]-[GA]; that stretch reads PKPGPKPGPKQADKPK. Residues 235–244 are compositionally biased toward basic and acidic residues; the sequence is QADKPKDAKK. A 3-4; approximate repeat occupies 237–240; that stretch reads DKPK.

In terms of tissue distribution, salivary gland.

The protein resides in the secreted. Used by the larvae to construct a supramolecular structure, the larval tube. In Chironomus tentans (Midge), this protein is Salivary gland SP38-40.A protein (SP38-40.A).